A 317-amino-acid polypeptide reads, in one-letter code: Porphobilinogen deaminase (317 aa).

Position 245 is an S-(dipyrrolylmethanemethyl)cysteine (C245).

It belongs to the HMBS family. In terms of assembly, monomer. Dipyrromethane serves as cofactor.

It catalyses the reaction 4 porphobilinogen + H2O = hydroxymethylbilane + 4 NH4(+). It participates in porphyrin-containing compound metabolism; protoporphyrin-IX biosynthesis; coproporphyrinogen-III from 5-aminolevulinate: step 2/4. It functions in the pathway porphyrin-containing compound metabolism; chlorophyll biosynthesis. Its function is as follows. Tetrapolymerization of the monopyrrole PBG into the hydroxymethylbilane pre-uroporphyrinogen in several discrete steps. This chain is Porphobilinogen deaminase, found in Synechococcus sp. (strain RCC307).